Reading from the N-terminus, the 416-residue chain is Enterobactin exporter EntS (416 aa).

At 1–21 the chain is on the cytoplasmic side; the sequence is MNKQSWLLNLSLLKTHPAFRA. Residues 22–42 traverse the membrane as a helical segment; sequence VFLARFISIVSLGLLGVAVPV. Over 43–55 the chain is Periplasmic; sequence QIQMMTHSTWLVG. A helical transmembrane segment spans residues 56–76; that stretch reads LSVTLTGGAMFVGLMVGGVLA. The Cytoplasmic segment spans residues 77–83; sequence DRYERKK. A helical transmembrane segment spans residues 84-104; sequence VILLARGTCGIGFIGLCLNAL. Residues 105 to 109 lie on the Periplasmic side of the membrane; the sequence is LPEPS. Residues 110 to 130 traverse the membrane as a helical segment; it reads LLAIYLLGLWDGFFASLGVTA. Topologically, residues 131 to 156 are cytoplasmic; it reads LLAATPALVGRENLMQAGAITMLTVR. The helical transmembrane segment at 157–177 threads the bilayer; sequence LGSVISPMIGGLLLATGGVAW. Position 178 (asparagine 178) is a topological domain, periplasmic. Residues 179–199 form a helical membrane-spanning segment; that stretch reads YGLAAAGTFITLLPLLSLPAL. The Cytoplasmic portion of the chain corresponds to 200–218; sequence PPPPQPREHPLKSLLAGFR. A helical transmembrane segment spans residues 219-239; sequence FLLASPLVGGIALLGGLLTMA. At 240–256 the chain is on the periplasmic side; sequence SAVRVLYPALADNWQMS. Residues 257-277 form a helical membrane-spanning segment; it reads AAEIGFLYAAIPLGAAIGALT. Topologically, residues 278 to 287 are cytoplasmic; it reads SGKLAHSARP. The helical transmembrane segment at 288–307 threads the bilayer; it reads GLLMLLSTLGSFLAIGLFGL. Topologically, residues 308–313 are periplasmic; the sequence is MPMWIL. The chain crosses the membrane as a helical span at residues 314-336; sequence GVVCLALFGWLSAVSSLLQYTML. At 337–356 the chain is on the cytoplasmic side; that stretch reads QTQTPEAMLGRINGLWTAQN. A helical transmembrane segment spans residues 357–377; it reads VTGDAIGAALLGGLGAMMTPV. A topological domain (periplasmic) is located at residue alanine 378. The chain crosses the membrane as a helical span at residues 379–399; that stretch reads SASASGFGLLIIGVLLLLVLV. At 400-416 the chain is on the cytoplasmic side; the sequence is ELRRFRQTPPQVTASDS.

Belongs to the major facilitator superfamily. EntS (TC 2.A.1.38) family.

Its subcellular location is the cell inner membrane. Functionally, component of an export pathway for enterobactin. This chain is Enterobactin exporter EntS, found in Shigella boydii serotype 4 (strain Sb227).